Here is a 292-residue protein sequence, read N- to C-terminus: D-galactarolactone isomerase (292 aa).

Belongs to the metallo-dependent hydrolases superfamily. Requires Does not require a metal cofactor. as cofactor.

The catalysed reaction is D-galactaro-1,5-lactone = D-galactaro-1,4-lactone. It participates in carbohydrate acid metabolism; D-galacturonate degradation via prokaryotic oxidative pathway. In terms of biological role, catalyzes the isomerization of D-galactaro-1,5-lactone to D-galactaro-1,4-lactone. This is a step in the oxidative degradation pathway of D-galacturonate, which allows A.tumefaciens to utilize D-galacturonate as a sole carbon source. In Agrobacterium fabrum (strain C58 / ATCC 33970) (Agrobacterium tumefaciens (strain C58)), this protein is D-galactarolactone isomerase.